The sequence spans 355 residues: N6-Methyl-AMP deaminase (355 aa).

Residues histidine 24 and histidine 26 each coordinate Zn(2+). N(6)-methyl-AMP-binding positions include histidine 26, asparagine 28, histidine 74, 106–109, aspartate 148, and glycine 181; that span reads STPR. Residue histidine 208 participates in Zn(2+) binding. Positions 211, 293, and 294 each coordinate N(6)-methyl-AMP. Catalysis depends on glutamate 211, which acts as the Proton donor. Aspartate 293 lines the Zn(2+) pocket.

It belongs to the metallo-dependent hydrolases superfamily. Adenosine and AMP deaminases family. Monomer. Zn(2+) is required as a cofactor.

The catalysed reaction is N(6)-methyl-AMP + H2O + H(+) = IMP + methylamine. In terms of biological role, catalyzes the hydrolysis of the free cytosolic methylated adenosine nucleotide N(6)-methyl-AMP (N6-mAMP) to produce inositol monophosphate (IMP) and methylamine. Is required for the catabolism of cytosolic N6-mAMP, which is derived from the degradation of mRNA containing N6-methylated adenine (m6A). Catalyzes the removal of different alkyl groups not only from N6-substituted purine or 2-aminopurine nucleoside monophosphates but also from O6-substituted compounds in vitro. The polypeptide is N6-Methyl-AMP deaminase (Homo sapiens (Human)).